Consider the following 140-residue polypeptide: NTF2-related export protein 1 (140 aa).

The residue at position 2 (A2) is an N-acetylalanine. Positions 16-135 (AAEEFVNVYY…WKIASDCFRF (120 aa)) constitute an NTF2 domain.

In terms of assembly, heterodimer with NXF1. Forms a complex with RANGAP1, RANBP2/NUP358 and NXF1. Interacts (via NTF2 domain) with NXF1. Stabilizes the NTF2 domain of NXF1 by heterodimerization. The formation of NXF1-NXT1 heterodimers is required for the NXF1-mediated nuclear mRNA export. Preferentially binds Ran-GTP. Associates with NXF2, NXF3 and NXF5. Does not bind nucleoporins (NPC) directly, its association to NPC is mediated by NXF1.

The protein localises to the nucleus. It localises to the nucleus speckle. Its subcellular location is the cytoplasm. In terms of biological role, stimulator of protein export for NES-containing proteins. Also plays a role in the nuclear export of U1 snRNA, tRNA, and mRNA. The NXF1-NXT1 heterodimer is involved in the export of HSP70 mRNA in conjunction with ALYREF/THOC4 and THOC5. This Bos taurus (Bovine) protein is NTF2-related export protein 1 (NXT1).